The sequence spans 60 residues: Large ribosomal subunit protein uL30 (60 aa).

It belongs to the universal ribosomal protein uL30 family. As to quaternary structure, part of the 50S ribosomal subunit.

The protein is Large ribosomal subunit protein uL30 of Mycobacteroides abscessus (strain ATCC 19977 / DSM 44196 / CCUG 20993 / CIP 104536 / JCM 13569 / NCTC 13031 / TMC 1543 / L948) (Mycobacterium abscessus).